The primary structure comprises 169 residues: Ribonuclease H (169 aa).

The RNase H type-1 domain occupies 3-159 (AHAALTLYTD…CDRLATDAAR (157 aa)). Mg(2+)-binding residues include Asp-12, Glu-63, Asp-87, and Asp-151.

This sequence belongs to the RNase H family. In terms of assembly, monomer. Requires Mg(2+) as cofactor.

Its subcellular location is the cytoplasm. The catalysed reaction is Endonucleolytic cleavage to 5'-phosphomonoester.. In terms of biological role, endonuclease that specifically degrades the RNA of RNA-DNA hybrids. This Treponema pallidum subsp. pallidum (strain SS14) protein is Ribonuclease H.